A 201-amino-acid polypeptide reads, in one-letter code: Probable GTP-binding protein EngB (201 aa).

Positions 21–191 (AAPQIILAGR…WNLLDVTAIP (171 aa)) constitute an EngB-type G domain. Residues 29–36 (GRSNVGKS), 56–60 (GKTRS), 75–78 (DLPG), 142–145 (TKSD), and 168–172 (ICVSS) contribute to the GTP site. Mg(2+) is bound by residues serine 36 and threonine 58.

This sequence belongs to the TRAFAC class TrmE-Era-EngA-EngB-Septin-like GTPase superfamily. EngB GTPase family. Mg(2+) is required as a cofactor.

Necessary for normal cell division and for the maintenance of normal septation. The sequence is that of Probable GTP-binding protein EngB from Maridesulfovibrio salexigens (strain ATCC 14822 / DSM 2638 / NCIMB 8403 / VKM B-1763) (Desulfovibrio salexigens).